The following is a 67-amino-acid chain: Protein AaeX (67 aa).

The next 2 membrane-spanning stretches (helical) occupy residues Val-3 to Val-23 and Leu-43 to Ser-63.

It belongs to the AaeX family.

It localises to the cell membrane. This is Protein AaeX from Erwinia tasmaniensis (strain DSM 17950 / CFBP 7177 / CIP 109463 / NCPPB 4357 / Et1/99).